Consider the following 404-residue polypeptide: Type I restriction enzyme EcoR124I/EcoR124II specificity subunit (404 aa).

Residues 1–153 are target-recognition domain 1; the sequence is MSEMSYLEKL…PIPCPDNPEK (153 aa). The conserved region 1 stretch occupies residues 154-199; sequence SLAIQSEIVRILDKFTALTAELTAELNMRKKQYNYYRDQLLSFKEG. The segment at 200–349 is target-recognition domain 2; the sequence is EVEWKTLGEI…KLFSFKIPVP (150 aa). Residues 350–404 are conserved region 2; sequence NINEQQRIVEILDKFDTLTNSITEGLPREIELRQKQYEYYRDLLFSFPKPETVSN.

This sequence belongs to the type-I restriction system S methylase family. The type I restriction/modification system is composed of three polypeptides R, M and S; the restriction enzyme has stoichiometry R(2)M(2)S(1) while the methyltransferase is M(2)S(1). There is an equilibrium between R(2)M(2)S(1) and R(1)M(2)S(1); the latter is methylation and translocation proficient but restriction deficient. In terms of assembly, (Microbial infection) Holoenenzyme interacts with Escherichia phage T7 protein Ocr; this interaction leads to the inhibition of the restriction activity, but may still allow methylation and translocation.

Its function is as follows. The specificity (S) subunit of a type I restriction enzyme; this subunit dictates DNA sequence specificity. The presence or absence of a 4-residue repeat changes the sequence specificity; a third copy of TAEL inserted at position 179-180 changes the recognition site from 5'-GAAN(6)RTCG-3' (for EcoR124I) to 5'-GAAN(7)RTCG-3' (for EcoR124II). The M and S subunits together form a methyltransferase (MTase) that methylates A-3 on the top and bottom strand of the sequence 5'-GAAN(7)RTCG-3'. In the presence of the R subunit the complex can also act as an endonuclease, binding to the same target sequence but cutting the DNA some distance from this site. Whether the DNA is cut or modified depends on the methylation state of the target sequence. When the target site is unmodified, the DNA is cut. When the target site is hemimethylated, the complex acts as a maintenance MTase modifying the DNA so that both strands become methylated. After locating a non-methylated recognition site, the enzyme complex serves as a molecular motor that translocates DNA in an ATP-dependent manner until a collision occurs that triggers cleavage. The R(1)M(2)S(1) complex translocates an average of 555 bp/second on nicked DNA; the R(2)M(2)S(1) complex translocates at double that speed. The 2 R subunit motors are independent and track along the helical pitch of the DNA, inducing positive supercoiling ahead of themselves. This is Type I restriction enzyme EcoR124I/EcoR124II specificity subunit (hsdS) from Escherichia coli.